Reading from the N-terminus, the 384-residue chain is 8-amino-7-oxononanoate synthase (384 aa).

Substrate is bound at residue Arg-21. Residue 108 to 109 (GF) participates in pyridoxal 5'-phosphate binding. His-133 is a binding site for substrate. Ser-179, His-207, and Thr-233 together coordinate pyridoxal 5'-phosphate. Residue Lys-236 is modified to N6-(pyridoxal phosphate)lysine. Thr-352 is a substrate binding site.

This sequence belongs to the class-II pyridoxal-phosphate-dependent aminotransferase family. BioF subfamily. Homodimer. It depends on pyridoxal 5'-phosphate as a cofactor.

The enzyme catalyses 6-carboxyhexanoyl-[ACP] + L-alanine + H(+) = (8S)-8-amino-7-oxononanoate + holo-[ACP] + CO2. It participates in cofactor biosynthesis; biotin biosynthesis. In terms of biological role, catalyzes the decarboxylative condensation of pimeloyl-[acyl-carrier protein] and L-alanine to produce 8-amino-7-oxononanoate (AON), [acyl-carrier protein], and carbon dioxide. The polypeptide is 8-amino-7-oxononanoate synthase (Shigella sonnei (strain Ss046)).